Reading from the N-terminus, the 164-residue chain is QYSWMCLSSFALSWRSYKHTNSQFLYFAPDLVFNEEKMHQSAMYELCQGMHQISLQFVRLQLTFEEYTIMKVLLLLSTIPKDGLKSQAAFEEMRTNYIKELRKMVTRCPNNSGQSWQRFYQLTKLLDSMHDLVSDLLEFCFYTFRESQALKVEFPRCWWRSSPT.

Residues 1-162 (QYSWMCLSSF…EFPRCWWRSS (162 aa)) form the NR LBD domain. 21-hydroxyprogesterone is bound by residues Arg-15 and Thr-143. The aldosterone site is built by Arg-15 and Thr-143. 2 residues coordinate progesterone: Arg-15 and Thr-143.

It belongs to the nuclear hormone receptor family. NR3 subfamily. Heteromultimeric cytoplasmic complex with HSP90, HSP70, and FKBP4, in the absence of ligand. After ligand binding, it translocates to the nucleus and binds to DNA as a homodimer and as a heterodimer with NR3C1. Binds the coactivator NCOA2. May interact with HSD11B2 in the absence of ligand. Binds the coactivators NCOA1, TIF1 and NRIP1. In terms of processing, phosphorylated.

The protein localises to the cytoplasm. Its subcellular location is the nucleus. The protein resides in the endoplasmic reticulum membrane. In terms of biological role, receptor for both mineralocorticoids (MC) such as aldosterone and glucocorticoids (GC) such as corticosterone or cortisol. Binds to mineralocorticoid response elements (MRE) and transactivates target genes. The effect of MC is to increase ion and water transport and thus raise extracellular fluid volume and blood pressure and lower potassium levels. This is Mineralocorticoid receptor (NR3C2) from Sus scrofa (Pig).